A 194-amino-acid polypeptide reads, in one-letter code: Isopentenyl-diphosphate Delta-isomerase (194 aa).

The Mn(2+) site is built by histidine 27 and histidine 34. The Nudix hydrolase domain occupies 32–166 (ALHLAFSCHV…PWAFSPWLTL (135 aa)). Residue cysteine 69 is part of the active site. Histidine 71 contacts Mn(2+). Glutamate 89 serves as a coordination point for Mg(2+). The Mn(2+) site is built by glutamate 116 and glutamate 118. Glutamate 118 is a catalytic residue.

This sequence belongs to the IPP isomerase type 1 family. Mg(2+) serves as cofactor. It depends on Mn(2+) as a cofactor.

It is found in the cytoplasm. The enzyme catalyses isopentenyl diphosphate = dimethylallyl diphosphate. The protein operates within isoprenoid biosynthesis; dimethylallyl diphosphate biosynthesis; dimethylallyl diphosphate from isopentenyl diphosphate: step 1/1. Functionally, catalyzes the 1,3-allylic rearrangement of the homoallylic substrate isopentenyl (IPP) to its highly electrophilic allylic isomer, dimethylallyl diphosphate (DMAPP). This Clavibacter michiganensis subsp. michiganensis (strain NCPPB 382) protein is Isopentenyl-diphosphate Delta-isomerase.